The primary structure comprises 612 residues: uncharacterized protein (612 aa).

The interval 213–238 is disordered; sequence ASAEDGEEAAAGAGKRQVARSGARKR. Residues 421-610 form the VWFA domain; sequence DLACLLLADL…ERLLQLYRRL (190 aa).

It is found in the cytoplasm. In terms of biological role, component of the anaerobic respiratory chain that transforms nitrate to dinitrogen (denitrification). Function unknown, but essential for the denitrification process. This is an uncharacterized protein from Pseudomonas aeruginosa (strain ATCC 15692 / DSM 22644 / CIP 104116 / JCM 14847 / LMG 12228 / 1C / PRS 101 / PAO1).